Consider the following 365-residue polypeptide: Eukaryotic translation initiation factor 3 subunit H (365 aa).

Residues 11–160 form the MPN domain; it reads VKVEALVVMK…LRAFRLSPKF (150 aa).

Belongs to the eIF-3 subunit H family. In terms of assembly, component of the eukaryotic translation initiation factor 3 (eIF-3) complex.

It localises to the cytoplasm. Component of the eukaryotic translation initiation factor 3 (eIF-3) complex, which is involved in protein synthesis of a specialized repertoire of mRNAs and, together with other initiation factors, stimulates binding of mRNA and methionyl-tRNAi to the 40S ribosome. The eIF-3 complex specifically targets and initiates translation of a subset of mRNAs involved in cell proliferation. This is Eukaryotic translation initiation factor 3 subunit H from Aspergillus niger (strain ATCC MYA-4892 / CBS 513.88 / FGSC A1513).